We begin with the raw amino-acid sequence, 208 residues long: Protein GrpE (208 aa).

The span at 1-27 (MERMNQSRKVPIHDAAEESSAEAHETQ) shows a compositional bias: basic and acidic residues. The interval 1-65 (MERMNQSRKV…AEEAQEEEAA (65 aa)) is disordered. Residues 45–64 (MAEEAVEQAQDAEEAQEEEA) show a composition bias toward acidic residues.

This sequence belongs to the GrpE family. Homodimer.

It is found in the cytoplasm. In terms of biological role, participates actively in the response to hyperosmotic and heat shock by preventing the aggregation of stress-denatured proteins, in association with DnaK and GrpE. It is the nucleotide exchange factor for DnaK and may function as a thermosensor. Unfolded proteins bind initially to DnaJ; upon interaction with the DnaJ-bound protein, DnaK hydrolyzes its bound ATP, resulting in the formation of a stable complex. GrpE releases ADP from DnaK; ATP binding to DnaK triggers the release of the substrate protein, thus completing the reaction cycle. Several rounds of ATP-dependent interactions between DnaJ, DnaK and GrpE are required for fully efficient folding. This chain is Protein GrpE, found in Desulfatibacillum aliphaticivorans.